We begin with the raw amino-acid sequence, 455 residues long: Beta-glucosidase A (455 aa).

E165 functions as the Proton donor in the catalytic mechanism. Catalysis depends on E363, which acts as the Nucleophile.

The protein belongs to the glycosyl hydrolase 1 family.

The enzyme catalyses Hydrolysis of terminal, non-reducing beta-D-glucosyl residues with release of beta-D-glucose.. The polypeptide is Beta-glucosidase A (bglA) (Caldicellulosiruptor saccharolyticus (Caldocellum saccharolyticum)).